A 648-amino-acid chain; its full sequence is Biosynthetic arginine decarboxylase (648 aa).

Lys109 bears the N6-(pyridoxal phosphate)lysine mark. 291-301 contributes to the substrate binding site; sequence LDVGGGLGVDY.

The protein belongs to the Orn/Lys/Arg decarboxylase class-II family. SpeA subfamily. It depends on Mg(2+) as a cofactor. The cofactor is pyridoxal 5'-phosphate.

It carries out the reaction L-arginine + H(+) = agmatine + CO2. Its function is as follows. Catalyzes the biosynthesis of agmatine from arginine. The chain is Biosynthetic arginine decarboxylase from Prochlorococcus marinus (strain SARG / CCMP1375 / SS120).